Reading from the N-terminus, the 670-residue chain is MNAPERIDSAARCANALRFLAADAVEQAKSGHPGAPMGMAEMAEVLWRRHLRHNPANPAWPDRDRFVLSNGHASMLQYALLHLTGYDLPMSQLRQFRQLHAATPGHPELGVTPGVETTTGPLGQGLANAVGMALAEKLLAATFNRPGFDIVDHHTYVFLGDGCLMEGLSHEACSLAGTLRLGKLICLYDDNGISIDGEVAGWFADDTPKRFAAYGWHVIADVDGHDAHALDAALHEAKAERDRPTLICCRTVIGKGAPAKAGGHDVHGAPLGAPEIAAMRTALGWEAEPFTVPADVADAWDARAQGAAREAEWEARFVSYCAAHPELAEEFVRRANGRLPEGFDAELMALLDAPSPLQGKIATRKASQLCLEALTPALPELLGGSADLTGSNLTNVKASVWVNHAGHGNYVSYGVREFGMAAAMNGIALHGGLIPYGGTFMTFSDYSRNAIRMAALMRLRVVHVLTHDSIGLGEDGPTHQPVEHAASLRLIPNNQVWRPCDGAETAYAWLAALRREDGPSCLVLSRQALMPFERNPAQRAEIARGGYVLRDVPAPRVVLIATGSEVEIAMRAALDLADAGIAARVVSMPCVELFYAQDVAYRDTVLPPGLPRVSVEAGGTWFWRGVVGEQGLALGIDTFGESAPAEALYQHFGLTPAHVAAAARVLLEEA.

Histidine 32 lines the substrate pocket. Thiamine diphosphate-binding positions include histidine 72 and 120–122 (GPL). Aspartate 161 is a Mg(2+) binding site. Positions 162 and 191 each coordinate thiamine diphosphate. Residues asparagine 191 and isoleucine 193 each contribute to the Mg(2+) site. Residues histidine 267, arginine 364, and serine 391 each coordinate substrate. Histidine 267 serves as a coordination point for thiamine diphosphate. Glutamate 417 acts as the Proton donor in catalysis. Phenylalanine 443 provides a ligand contact to thiamine diphosphate. 3 residues coordinate substrate: histidine 467, aspartate 475, and arginine 526.

Belongs to the transketolase family. As to quaternary structure, homodimer. Mg(2+) is required as a cofactor. Ca(2+) serves as cofactor. The cofactor is Mn(2+). Requires Co(2+) as cofactor. It depends on thiamine diphosphate as a cofactor.

The catalysed reaction is D-sedoheptulose 7-phosphate + D-glyceraldehyde 3-phosphate = aldehydo-D-ribose 5-phosphate + D-xylulose 5-phosphate. The protein operates within carbohydrate biosynthesis; Calvin cycle. Functionally, catalyzes the transfer of a two-carbon ketol group from a ketose donor to an aldose acceptor, via a covalent intermediate with the cofactor thiamine pyrophosphate. In Cupriavidus necator (strain ATCC 17699 / DSM 428 / KCTC 22496 / NCIMB 10442 / H16 / Stanier 337) (Ralstonia eutropha), this protein is Transketolase, chromosomal (cbbTC).